Consider the following 425-residue polypeptide: Serine--tRNA ligase (425 aa).

Residue 231–233 (TAE) participates in L-serine binding. Residue 262-264 (RSE) coordinates ATP. E285 lines the L-serine pocket. Residue 349-352 (EISS) participates in ATP binding. S385 lines the L-serine pocket.

Belongs to the class-II aminoacyl-tRNA synthetase family. Type-1 seryl-tRNA synthetase subfamily. As to quaternary structure, homodimer. The tRNA molecule binds across the dimer.

It localises to the cytoplasm. It catalyses the reaction tRNA(Ser) + L-serine + ATP = L-seryl-tRNA(Ser) + AMP + diphosphate + H(+). The enzyme catalyses tRNA(Sec) + L-serine + ATP = L-seryl-tRNA(Sec) + AMP + diphosphate + H(+). It participates in aminoacyl-tRNA biosynthesis; selenocysteinyl-tRNA(Sec) biosynthesis; L-seryl-tRNA(Sec) from L-serine and tRNA(Sec): step 1/1. Its function is as follows. Catalyzes the attachment of serine to tRNA(Ser). Is also able to aminoacylate tRNA(Sec) with serine, to form the misacylated tRNA L-seryl-tRNA(Sec), which will be further converted into selenocysteinyl-tRNA(Sec). The chain is Serine--tRNA ligase from Halalkalibacterium halodurans (strain ATCC BAA-125 / DSM 18197 / FERM 7344 / JCM 9153 / C-125) (Bacillus halodurans).